A 271-amino-acid polypeptide reads, in one-letter code: Protein-L-isoaspartate O-methyltransferase (271 aa).

Residues 1-15 are compositionally biased toward pro residues; sequence MRKPVTPPGNPPRPR. Positions 1–60 are disordered; sequence MRKPVTPPGNPPRPRSPGYGSTSLAPGITAANSNTRISPPTLARPAPAAGAGGQGGNLGL. Low complexity predominate over residues 39–49; it reads PPTLARPAPAA. The active site involves Ser-119.

This sequence belongs to the methyltransferase superfamily. L-isoaspartyl/D-aspartyl protein methyltransferase family.

Its subcellular location is the cytoplasm. The catalysed reaction is [protein]-L-isoaspartate + S-adenosyl-L-methionine = [protein]-L-isoaspartate alpha-methyl ester + S-adenosyl-L-homocysteine. Catalyzes the methyl esterification of L-isoaspartyl residues in peptides and proteins that result from spontaneous decomposition of normal L-aspartyl and L-asparaginyl residues. It plays a role in the repair and/or degradation of damaged proteins. The polypeptide is Protein-L-isoaspartate O-methyltransferase (Bordetella petrii (strain ATCC BAA-461 / DSM 12804 / CCUG 43448)).